The following is a 428-amino-acid chain: Elongation factor 1-alpha (428 aa).

The 221-residue stretch at Lys-5–Thr-225 folds into the tr-type G domain. The segment at Gly-14 to Ser-21 is G1. Gly-14 to Ser-21 lines the GTP pocket. Ser-21 provides a ligand contact to Mg(2+). Residues Gly-70–Asp-74 form a G2 region. The tract at residues Asp-91–Gly-94 is G3. GTP is bound by residues Asp-91–His-95 and Asn-149–Asp-152. The interval Asn-149–Asp-152 is G4. The tract at residues Ala-189–Leu-191 is G5.

The protein belongs to the TRAFAC class translation factor GTPase superfamily. Classic translation factor GTPase family. EF-Tu/EF-1A subfamily.

The protein localises to the cytoplasm. It catalyses the reaction GTP + H2O = GDP + phosphate + H(+). Its function is as follows. GTP hydrolase that promotes the GTP-dependent binding of aminoacyl-tRNA to the A-site of ribosomes during protein biosynthesis. This is Elongation factor 1-alpha from Methanococcus vannielii (strain ATCC 35089 / DSM 1224 / JCM 13029 / OCM 148 / SB).